The following is a 107-amino-acid chain: Ferredoxin Fdx8 (107 aa).

4Fe-4S ferredoxin-type domains follow at residues 1–31 (MAYV…GPLA) and 50–79 (LQLY…DEDE). Residues Cys-9, Cys-13, Cys-17, Cys-21, Cys-59, Cys-62, Cys-65, and Cys-69 each coordinate [4Fe-4S] cluster.

[4Fe-4S] cluster serves as cofactor.

Ferredoxins are iron-sulfur proteins that transfer electrons in a wide variety of metabolic reactions. Fdx2 can receive electrons from both FdR_A and FdR_B ferredoxin reductases, with a preference for FdR_B compared with FdR_A, and transfer the electrons to the cytochrome P450 CYP260A1. The chain is Ferredoxin Fdx8 from Sorangium cellulosum (strain So ce56) (Polyangium cellulosum (strain So ce56)).